The sequence spans 63 residues: Small ribosomal subunit protein bS21 (63 aa).

Belongs to the bacterial ribosomal protein bS21 family.

The sequence is that of Small ribosomal subunit protein bS21 from Porphyromonas gingivalis (strain ATCC 33277 / DSM 20709 / CIP 103683 / JCM 12257 / NCTC 11834 / 2561).